A 450-amino-acid polypeptide reads, in one-letter code: Probable galactarate/D-glucarate transporter GudP (450 aa).

Topologically, residues 1 to 20 (MSSLSQAASSVEKRTNARYW) are cytoplasmic. The chain crosses the membrane as a helical span at residues 21–41 (IVVMLFIVTSFNYGDRATLSI). Residues 42–58 (AGSEMAKDIGLDPVGMG) lie on the Periplasmic side of the membrane. A helical transmembrane segment spans residues 59 to 79 (YVFSAFSWAYVIGQIPGGWLL). Residues 80–85 (DRFGSK) lie on the Cytoplasmic side of the membrane. Residues 86–105 (RVYFWSIFIWSMFTLLQGFV) form a helical membrane-spanning segment. Over 106-109 (DIFS) the chain is Periplasmic. The helical transmembrane segment at 110 to 132 (GFGIIVALFTLRFLVGLAEAPSF) threads the bilayer. Residues 133–153 (PGNSRIVAAWFPAQERGTAVS) lie on the Cytoplasmic side of the membrane. The chain crosses the membrane as a helical span at residues 154–174 (IFNSAQYFATVIFAPIMGWLT). Over 175-176 (HE) the chain is Periplasmic. A helical transmembrane segment spans residues 177-197 (VGWSHVFFFMGGLGIVISFIW). At 198 to 254 (LKVIHEPNQHPGVNKKELEYIAAGGALINMDQQNTKVKVPFSVKWGQIKQLLGSRMM) the chain is on the cytoplasmic side. A helical transmembrane segment spans residues 255 to 275 (IGVYIGQYCINALTYFFITWF). Residues 276–290 (PVYLVQARGMSILKA) are Periplasmic-facing. A helical membrane pass occupies residues 291–311 (GFVASVPAVCGFIGGVLGGII). The Cytoplasmic segment spans residues 312-329 (SDWLMRRTGSLNIARKTP). A helical membrane pass occupies residues 330–350 (IVMGMLLSMVMVFCNYVNVEW). Residue Met351 is a topological domain, periplasmic. Residues 352–372 (IIGFMALAFFGKGIGALGWAV) form a helical membrane-spanning segment. The Cytoplasmic segment spans residues 373-387 (MADTAPKEISGLSGG). The chain crosses the membrane as a helical span at residues 388–408 (LFNMFGNISGIVTPIAIGYIV). The Periplasmic segment spans residues 409 to 415 (GTTGSFN). A helical transmembrane segment spans residues 416–436 (GALIYVGVHALIAVLSYLVLV). Residues 437–450 (GDIKRIELKPVAGQ) lie on the Cytoplasmic side of the membrane.

Belongs to the major facilitator superfamily. Phthalate permease family.

The protein resides in the cell inner membrane. The enzyme catalyses galactarate(in) + H(+)(in) = galactarate(out) + H(+)(out). The catalysed reaction is D-glucarate(in) + H(+)(in) = D-glucarate(out) + H(+)(out). It carries out the reaction (R)-glycerate(in) + H(+)(in) = (R)-glycerate(out) + H(+)(out). In terms of biological role, probably involved in the uptake of galactarate and/or D-glucarate. May also transport D-glycerate. In Escherichia coli (strain K12), this protein is Probable galactarate/D-glucarate transporter GudP.